Consider the following 427-residue polypeptide: NAD kinase 2, mitochondrial (427 aa).

The N-terminal 33 residues, 1 to 33 (MSLCLRLLCSVCGAAALRVPLGVSSLRALSGSA), are a transit peptide targeting the mitochondrion.

It belongs to the NAD kinase family. As to quaternary structure, homodimer.

The protein localises to the mitochondrion. It catalyses the reaction NAD(+) + ATP = ADP + NADP(+) + H(+). In terms of biological role, mitochondrial NAD(+) kinase that phosphorylates NAD(+) to yield NADP(+). Can use both ATP or inorganic polyphosphate as the phosphoryl donor. This chain is NAD kinase 2, mitochondrial (nadk2), found in Xenopus tropicalis (Western clawed frog).